A 185-amino-acid polypeptide reads, in one-letter code: Ribosome-recycling factor (185 aa).

It belongs to the RRF family.

Its subcellular location is the cytoplasm. Its function is as follows. Responsible for the release of ribosomes from messenger RNA at the termination of protein biosynthesis. May increase the efficiency of translation by recycling ribosomes from one round of translation to another. The polypeptide is Ribosome-recycling factor (Chloroflexus aggregans (strain MD-66 / DSM 9485)).